The following is a 916-amino-acid chain: Protein translocase subunit SecA (916 aa).

Residues Gln-87, 105–109 (GEGKT), and Asp-512 each bind ATP. Positions 857–916 (QHAEAPSMEQAVAGEEEELPEGPAPVVPLEPVRNEQKIGRNEPCPCGSGKKYKHCHGQLD) are disordered. The Zn(2+) site is built by Cys-900, Cys-902, Cys-911, and His-912. Positions 906-916 (KKYKHCHGQLD) are enriched in basic residues.

It belongs to the SecA family. As to quaternary structure, monomer and homodimer. Part of the essential Sec protein translocation apparatus which comprises SecA, SecYEG and auxiliary proteins SecDF-YajC and YidC. Zn(2+) serves as cofactor.

Its subcellular location is the cell inner membrane. It localises to the cytoplasm. The enzyme catalyses ATP + H2O + cellular proteinSide 1 = ADP + phosphate + cellular proteinSide 2.. Part of the Sec protein translocase complex. Interacts with the SecYEG preprotein conducting channel. Has a central role in coupling the hydrolysis of ATP to the transfer of proteins into and across the cell membrane, serving both as a receptor for the preprotein-SecB complex and as an ATP-driven molecular motor driving the stepwise translocation of polypeptide chains across the membrane. The protein is Protein translocase subunit SecA of Pseudomonas aeruginosa (strain UCBPP-PA14).